The chain runs to 1170 residues: Thrombospondin-1 (1170 aa).

A signal peptide spans 1–18 (MGLAWGLGVLLLLHACGS). Residues 47 to 95 (RLVKGPDPSSPAFRIEDANLIPPVPDKKFQDLVDAVRAEKGFLLLASLR) are heparin-binding. One can recognise a Laminin G-like domain in the interval 65–270 (NLIPPVPDKK…HKTKDLQAIC (206 aa)). Residues Cys-171 and Cys-232 are joined by a disulfide bond. Residues Asn-248 and Asn-360 are each glycosylated (N-linked (GlcNAc...) asparagine). The region spanning 316-373 (PLCYHNGVQYRTGDEWTVDSCTECRCQNSVTICKKVSCPIMPCSNATVPDGECCPRCW) is the VWFC domain. 3 TSP type-1 domains span residues 379–429 (DDGW…QECD), 435–490 (DGGW…DSCP), and 492–547 (NGGW…QDCP). Cystine bridges form between Cys-391/Cys-423, Cys-395/Cys-428, Cys-406/Cys-413, Cys-447/Cys-484, Cys-451/Cys-489, Cys-462/Cys-474, Cys-504/Cys-541, Cys-508/Cys-546, Cys-519/Cys-531, Cys-551/Cys-562, Cys-556/Cys-572, Cys-575/Cys-586, Cys-592/Cys-608, Cys-599/Cys-617, Cys-620/Cys-644, Cys-650/Cys-663, Cys-657/Cys-676, Cys-678/Cys-689, Cys-705/Cys-713, Cys-718/Cys-738, Cys-754/Cys-774, Cys-777/Cys-797, Cys-813/Cys-833, Cys-836/Cys-856, Cys-874/Cys-894, Cys-910/Cys-930, and Cys-946/Cys-1167. In terms of domain architecture, EGF-like 1 spans 547-587 (PIDGCLSNPCFAGVQCTSYPDGSWKCGACPPGYSGDGVECK). O-linked (Xyl) serine glycosylation is present at Ser-553. The 45-residue stretch at 646–690 (PRNPCTDGTHDCNKNAKCNYLGHYSDPMYRCECKPGYAGNGIICG) folds into the EGF-like 2 domain. 8 TSP type-3 repeats span residues 691–726 (EDTD…NSGQ), 727–762 (EDYD…NPAQ), 763–785 (YDYD…NPDQ), 786–821 (ADTD…NVDQ), 822–844 (KDTD…NPDQ), 845–882 (LDSD…NANQ), 883–918 (ADHD…NPDQ), and 919–954 (KDSD…DISE). The N-linked (GlcNAc...) asparagine glycan is linked to Asn-708. The interval 839–944 (EHNPDQLDSD…DQDKVPDIDD (106 aa)) is disordered. 3 stretches are compositionally biased toward basic and acidic residues: residues 840–854 (HNPD…RIGD), 883–894 (ADHDKDGKGDAC), and 917–941 (DQKD…KVPD). The short motif at 926-928 (RGD) is the Cell attachment site element. The region spanning 958–1170 (RRFQMIPLDP…SDLKYECRDS (213 aa)) is the TSP C-terminal domain. Residues Asn-1067 and Asn-1085 are each glycosylated (N-linked (GlcNAc...) asparagine).

Belongs to the thrombospondin family. In terms of assembly, homotrimer; disulfide-linked. Can bind to fibrinogen, fibronectin, laminin, type V collagen and integrins alpha-V/beta-1, alpha-V/beta-3 and alpha-IIb/beta-3. Binds heparin. Interacts (via the C-terminal domain) with CD47. Interacts (via the TSP type I repeats) with CD36; the interaction conveys an antiangiogenic effect. Interacts (via the TSP type I repeats) with HRG; the interaction blocks the antiangiogenic effect of THBS1 with CD36. Interacts with ATF6 (via lumenal domain). Interacts with FN1; this interaction is enhanced by TNFAIP6, which may act as a bridging molecule between FN1 and THBS1. Interacts with SIRPA; the interaction stimulates phosphorylation of SIRPA. As to expression, odontoblasts.

It is found in the secreted. The protein resides in the cell surface. Its subcellular location is the extracellular space. It localises to the extracellular matrix. The protein localises to the endoplasmic reticulum. It is found in the sarcoplasmic reticulum. Functionally, adhesive glycoprotein that mediates cell-to-cell and cell-to-matrix interactions. Multifunctional, involved in inflammation, angiogenesis, wound healing, reactive oxygen species (ROS) signaling, nitrous oxide (NO) signaling, apoptosis, senescence, aging, cellular self-renewal, stemness, and cardiovascular and metabolic homeostasis. Negatively modulates dendritic cell activation and cytokine release, as part of an autocrine feedback loop, contributing to the resolution of inflammation and immune homeostasis. Ligand for receptor CD47. Modulates nitrous oxide (NO) signaling via CD47, hence playing a role as a pressor agent, supporting blood pressure. Plays a role in endothelial cell senescence, acting via CD47, by increasing the abundance and activation of NADPH oxidase NOX1, and so generating excess ROS. Inhibits stem cell self-renewal, acting via CD47 signaling, probably by regulation of the stem cell transcription factors POU5F1/OCT4, SOX2, MYC/c-Myc and KLF4. Negatively modulates wound healing, acting via CD47. Ligand for receptor CD36. Involved in inducing apoptosis in podocytes in response to elevated free fatty acids, acting via CD36. Plays a role in suppressing angiogenesis, acting, depending on context, via CD36 or CD47. Promotes cellular senescence in a TP53-CDKN1A-RB1 signaling-dependent manner. Ligand for immunoglobulin-like cell surface receptor SIRPA. Involved in ROS signaling in non-phagocytic cells, stimulating NADPH oxidase-derived ROS production, acting via interaction with SIRPA. Plays a role in metabolic dysfunction in diet-induced obesity, perhaps acting by exacerbating adipose inflammatory activity; its effects may be mediated, at least in part, through enhanced adipocyte proliferation. Plays a role in ER stress response, via its interaction with the activating transcription factor 6 alpha (ATF6) which produces adaptive ER stress response factors. May be involved in age-related conditions, including metabolic dysregulation, during normal aging. This Bos taurus (Bovine) protein is Thrombospondin-1 (THBS1).